The sequence spans 418 residues: Metacaspase-4 (418 aa).

Catalysis depends on residues H86 and C139. Position 139 is an S-nitrosocysteine (C139). The interval 153 to 172 (GESTKKEAEDEDESEESSSR) is disordered.

Belongs to the peptidase C14B family. The two subunits are derived from the precursor sequence by an autocatalytic mechanism. As to expression, expressed in roots, cotyledons, leaves, cauline leaves, pollen and embryos.

It is found in the cytoplasm. The protein localises to the cytosol. With respect to regulation, activated by Ca(2+) which induces self-processing and accelerates the rate of the enzyme activity, but has no effect on Km. Cysteine protease that cleaves specifically after arginine or lysine residues. Does not cleave caspase-specific substrates. Plays a positive regulatory role in biotic and abiotic stress-induced programmed cell death. The chain is Metacaspase-4 (AMC4) from Arabidopsis thaliana (Mouse-ear cress).